A 389-amino-acid chain; its full sequence is Indole-3-acetate monooxygenase (389 aa).

This sequence belongs to the HpaH/HsaA monooxygenase family.

It catalyses the reaction (indol-3-yl)acetate + NADH + O2 + H(+) = 2-hydroxy-(1H-indol-3-yl)acetate + NAD(+) + H2O. The catalysed reaction is indole + NADH + O2 + H(+) = indoxyl + NAD(+) + H2O. Its function is as follows. Involved in the degradation of the plant hormone indole-3-acetic acid (IAA). Catalyzes the first step of the pathway, the conversion of IAA to 2-hydroxy-IAA (2-OH-IAA). Can also convert indole to indoxyl, which spontaneously dimerizes in the presence of oxygen to form the blue pigment indigo. The polypeptide is Indole-3-acetate monooxygenase (Pseudomonas putida (Arthrobacter siderocapsulatus)).